Here is a 209-residue protein sequence, read N- to C-terminus: MSNDSSKAKQNQVDEAVEGEILTESEVETGNDEASLMDELTQANFRVEELEQALAEANAKIEEQKDSVTRAAASEANIRRRAAQDVEKAHKFALEKFANELLPVIDNMERALQGTNAEAEETKAIYEGVELTLKSFVSTVDKFGLKEVNPHGESFNPEHHQAIGMQPSPEFPANTVMMVMQKGYILNDRLLRPAMVMVSQGGSGVDTQA.

Positions 1–13 (MSNDSSKAKQNQV) are enriched in polar residues. The tract at residues 1–33 (MSNDSSKAKQNQVDEAVEGEILTESEVETGNDE) is disordered. A compositionally biased stretch (acidic residues) spans 15–31 (EAVEGEILTESEVETGN).

This sequence belongs to the GrpE family. Homodimer.

Its subcellular location is the cytoplasm. Functionally, participates actively in the response to hyperosmotic and heat shock by preventing the aggregation of stress-denatured proteins, in association with DnaK and GrpE. It is the nucleotide exchange factor for DnaK and may function as a thermosensor. Unfolded proteins bind initially to DnaJ; upon interaction with the DnaJ-bound protein, DnaK hydrolyzes its bound ATP, resulting in the formation of a stable complex. GrpE releases ADP from DnaK; ATP binding to DnaK triggers the release of the substrate protein, thus completing the reaction cycle. Several rounds of ATP-dependent interactions between DnaJ, DnaK and GrpE are required for fully efficient folding. The sequence is that of Protein GrpE from Shewanella woodyi (strain ATCC 51908 / MS32).